A 160-amino-acid polypeptide reads, in one-letter code: MKPTYRIFNAVVLGSLVLDQATKVLIDRTMDLYQSIPVIDGLFSITYLRNRGAAFSFLADFSYRLPFFILVSVVALGVIAVTFRKLRDDQHLAAAALALIFSGALGNLIDRVRLGEVIDFLDVYWKTYHWPAFNVADSAICVGVALLAVDMIREERRKAP.

A run of 2 helical transmembrane segments spans residues 63-83 and 89-109; these read YRLP…AVTF and DQHL…GNLI. Catalysis depends on residues aspartate 119 and aspartate 137. The chain crosses the membrane as a helical span at residues 132–152; it reads AFNVADSAICVGVALLAVDMI.

This sequence belongs to the peptidase A8 family.

It localises to the cell inner membrane. It carries out the reaction Release of signal peptides from bacterial membrane prolipoproteins. Hydrolyzes -Xaa-Yaa-Zaa-|-(S,diacylglyceryl)Cys-, in which Xaa is hydrophobic (preferably Leu), and Yaa (Ala or Ser) and Zaa (Gly or Ala) have small, neutral side chains.. It functions in the pathway protein modification; lipoprotein biosynthesis (signal peptide cleavage). This protein specifically catalyzes the removal of signal peptides from prolipoproteins. This Geobacter sulfurreducens (strain ATCC 51573 / DSM 12127 / PCA) protein is Lipoprotein signal peptidase.